The primary structure comprises 812 residues: ATP-dependent RNA helicase dbp4 (812 aa).

The segment at 1-28 (MAPSNGHRNGKHAKSSNKSGNLKRKRVQ) is disordered. Residues 8 to 26 (RNGKHAKSSNKSGNLKRKR) show a composition bias toward basic residues. A Q motif motif is present at residues 48 to 76 (ESFSDLPISEPTLSGLTSSHFKTLTDIQS). One can recognise a Helicase ATP-binding domain in the interval 79–253 (ISHALKGRDV…RLSLQDPEYV (175 aa)). 92–99 (AKTGSGKT) contributes to the ATP binding site. The short motif at 201–204 (DEAD) is the DEAD box element. In terms of domain architecture, Helicase C-terminal spans 279–438 (KLDTLWSFIR…SIKNQLQNMC (160 aa)). Disordered regions lie at residues 503–538 (NASRATAYLTSGDEESDEEGGKKKQPKEKEVRTKYD), 560–626 (DGTI…ISDK), and 687–797 (ARFL…EKQI). Basic and acidic residues-rich tracts occupy residues 521 to 538 (EGGKKKQPKEKEVRTKYD), 579 to 596 (LSVKRRFDAGDDALHAED), 610 to 626 (EDHTEKKDPKVVKISDK), and 687 to 709 (ARFLAEEAARTQRADMEDKEIAK). A compositionally biased stretch (basic residues) spans 710 to 719 (QKRREKKEKR). 2 stretches are compositionally biased toward basic and acidic residues: residues 720 to 736 (KARERELLAEEEREERV) and 763 to 794 (EAPRPSKRAKVEEPKAVPWYKKEAGKKNDAGE).

The protein belongs to the DEAD box helicase family. DDX10/DBP4 subfamily. As to quaternary structure, interacts with the U3 and U14 snoRNAs. Associates with pre-ribosomal complexes.

The protein localises to the nucleus. It is found in the nucleolus. It carries out the reaction ATP + H2O = ADP + phosphate + H(+). Functionally, ATP-dependent RNA helicase required for ribosome biogenesis. Involved in the release of U14 snoRNA in pre-ribosomal complexes. Required for pre-rRNA cleavage at site A2. The chain is ATP-dependent RNA helicase dbp4 (dbp4) from Emericella nidulans (strain FGSC A4 / ATCC 38163 / CBS 112.46 / NRRL 194 / M139) (Aspergillus nidulans).